The following is a 356-amino-acid chain: Protein pelota homolog (356 aa).

This sequence belongs to the eukaryotic release factor 1 family. Pelota subfamily. Monomer. The cofactor is a divalent metal cation.

It is found in the cytoplasm. May function in recognizing stalled ribosomes, interact with stem-loop structures in stalled mRNA molecules, and effect endonucleolytic cleavage of the mRNA. May play a role in the release non-functional ribosomes and degradation of damaged mRNAs. Has endoribonuclease activity. This is Protein pelota homolog from Pyrococcus horikoshii (strain ATCC 700860 / DSM 12428 / JCM 9974 / NBRC 100139 / OT-3).